Here is a 100-residue protein sequence, read N- to C-terminus: NADH-quinone oxidoreductase subunit K (100 aa).

Helical transmembrane passes span 4 to 24 (TSYY…GVLL), 29 to 49 (IVVF…LVAF), and 60 to 80 (VIVF…LALL).

Belongs to the complex I subunit 4L family. NDH-1 is composed of 14 different subunits. Subunits NuoA, H, J, K, L, M, N constitute the membrane sector of the complex.

It is found in the cell membrane. The enzyme catalyses a quinone + NADH + 5 H(+)(in) = a quinol + NAD(+) + 4 H(+)(out). Functionally, NDH-1 shuttles electrons from NADH, via FMN and iron-sulfur (Fe-S) centers, to quinones in the respiratory chain. The immediate electron acceptor for the enzyme in this species is believed to be ubiquinone. Couples the redox reaction to proton translocation (for every two electrons transferred, four hydrogen ions are translocated across the cytoplasmic membrane), and thus conserves the redox energy in a proton gradient. This Chloroflexus aurantiacus (strain ATCC 29366 / DSM 635 / J-10-fl) protein is NADH-quinone oxidoreductase subunit K.